A 1361-amino-acid chain; its full sequence is Protein transport protein SEC16B homolog (1361 aa).

Residue Ser46 is modified to Phosphoserine. Disordered stretches follow at residues 82–109 (NEGA…HSDA), 487–513 (VDDA…GRPP), 984–1013 (PVGG…QEAT), 1025–1062 (SSLM…GRTP), 1163–1204 (ENKS…ARGR), 1216–1235 (NPPG…VQTA), and 1306–1361 (SVNG…EVEL). The span at 491-503 (PQSFQSSQLFSPS) shows a compositional bias: low complexity. Residues 996–1013 (TKGNLQGNEYQHQQQEAT) are compositionally biased toward polar residues. 3 stretches are compositionally biased toward polar residues: residues 1169–1200 (IPSN…NQFS), 1222–1234 (NSHT…SVQT), and 1308–1325 (NGDN…SWSG). The segment covering 1326 to 1354 (NFNTSFTPPTSPSTFKPVLLNSSSSSLGE) has biased composition (low complexity).

Belongs to the SEC16 family.

It localises to the golgi apparatus. It is found in the endoplasmic reticulum. Its function is as follows. Required for protein transport from the endoplasmic reticulum to the Golgi apparatus. This chain is Protein transport protein SEC16B homolog, found in Arabidopsis thaliana (Mouse-ear cress).